Here is a 206-residue protein sequence, read N- to C-terminus: High frequency lysogenization protein HflD homolog (206 aa).

The protein belongs to the HflD family.

Its subcellular location is the cytoplasm. The protein resides in the cell inner membrane. The polypeptide is High frequency lysogenization protein HflD homolog (Pseudomonas paraeruginosa (strain DSM 24068 / PA7) (Pseudomonas aeruginosa (strain PA7))).